Reading from the N-terminus, the 97-residue chain is Protein transport protein SFT1 (97 aa).

The Cytoplasmic portion of the chain corresponds to 1–74 (MSNSRYSQTE…RLTRSLKAGN (74 aa)). In terms of domain architecture, t-SNARE coiled-coil homology spans 7 to 69 (SQTESNNDRK…KNSSSRLTRS (63 aa)). A helical; Anchor for type IV membrane protein membrane pass occupies residues 75–94 (SIWRMVGLALLIFFILYTLF). Over 95 to 97 (KLF) the chain is Lumenal.

As to quaternary structure, component of a SNARE complex consisting of SED5, GOS1, YKT6 and SFT1.

Its subcellular location is the golgi apparatus membrane. Functionally, vesicle SNARE required for retrograde transport within the Golgi complex. The protein is Protein transport protein SFT1 (SFT1) of Saccharomyces cerevisiae (strain ATCC 204508 / S288c) (Baker's yeast).